A 553-amino-acid chain; its full sequence is MDYSGVYPSSSKVYVRGNLYSDVNVGMRKVAIKNGTSEFLVYDTGGPYTDREAKLDIKSGIRKLRSTWIENRRDTSPVQRSFVPSGSSCTRYQKAAENVLRKIAGGSPVTQLFYAQNGIITPEMEYVAIRENALRMQVGSSETGAAAHQEITPEFVRQEIAAGRAIIPANINHPESEPMVIGRNFLVKINANIGNSAVLSGIEEEVKKMALAVAYGADTVMDLSTGSDIHNIREWIIRNSPVPIGTVPIYQALNKVKGVVENLSFEVFKETIIEQAEQGVDYFTIHAGVLKDYIKHARGRVTGIVSRGGAIMAQWCLAHNKENFLYTHFDEICEIMGSYDVAFSLGDGLRPGSIDDANDEAQFLELKTLGELVKVAWHHGCQVMVEGPGHVPMHLIKENMEKQLHLCSEAPFYTLGPLTTDIAPGYDHITSAIGAAMIGWYGTAMLCYVTPKEHLGLPNIDDVKAGVISYKIAAHAADLAKGNPSAYARDYALSQARFDFRWYDQFNLSLDPLTAKSLHDESLPGKGGKTANFCSMCGPKFCSMKLSKELVDQ.

Substrate-binding positions include asparagine 192, methionine 221, tyrosine 250, histidine 286, 306–308, 347–350, and glutamate 386; these read SRG and DGLR. Histidine 390 contacts Zn(2+). Substrate is bound at residue tyrosine 413. Histidine 454 lines the Zn(2+) pocket. Cysteine 534, cysteine 537, and cysteine 542 together coordinate [4Fe-4S] cluster.

It belongs to the ThiC family. As to quaternary structure, homodimer. It depends on [4Fe-4S] cluster as a cofactor.

It carries out the reaction 5-amino-1-(5-phospho-beta-D-ribosyl)imidazole + S-adenosyl-L-methionine = 4-amino-2-methyl-5-(phosphooxymethyl)pyrimidine + CO + 5'-deoxyadenosine + formate + L-methionine + 3 H(+). The protein operates within cofactor biosynthesis; thiamine diphosphate biosynthesis. Its function is as follows. Catalyzes the synthesis of the hydroxymethylpyrimidine phosphate (HMP-P) moiety of thiamine from aminoimidazole ribotide (AIR) in a radical S-adenosyl-L-methionine (SAM)-dependent reaction. The sequence is that of Phosphomethylpyrimidine synthase from Anaplasma marginale (strain St. Maries).